Consider the following 588-residue polypeptide: D-3-phosphoglycerate dehydrogenase 3, chloroplastic (588 aa).

The transit peptide at methionine 1–serine 38 directs the protein to the chloroplast. Residues lysine 195 to valine 196, aspartate 215, valine 274 to arginine 276, and aspartate 300 each bind NAD(+). The active site involves arginine 276. Glutamate 305 is a catalytic residue. The Proton donor role is filled by histidine 324. Histidine 324 to alanine 327 is a binding site for NAD(+). Residues valine 516 to leucine 588 form the ACT domain.

Belongs to the D-isomer specific 2-hydroxyacid dehydrogenase family. As to expression, expressed in aerial parts. Not detected in roots and meristematic tissue. Expressed in cotyledons, adult leaves, stigma and anther filaments. Detected in the embryo.

Its subcellular location is the plastid. The protein resides in the chloroplast. The catalysed reaction is (2R)-3-phosphoglycerate + NAD(+) = 3-phosphooxypyruvate + NADH + H(+). It functions in the pathway amino-acid biosynthesis; L-serine biosynthesis; L-serine from 3-phospho-D-glycerate: step 1/3. With respect to regulation, partially inhibited by 1 mM serine. Functionally, involved in the plastidial phosphorylated pathway of serine biosynthesis (PPSB). The polypeptide is D-3-phosphoglycerate dehydrogenase 3, chloroplastic (PGDH3) (Arabidopsis thaliana (Mouse-ear cress)).